Reading from the N-terminus, the 286-residue chain is Homoserine kinase (286 aa).

78-88 is a binding site for ATP; the sequence is PLARGLGSSSS.

The protein belongs to the GHMP kinase family. Homoserine kinase subfamily.

The protein resides in the cytoplasm. It carries out the reaction L-homoserine + ATP = O-phospho-L-homoserine + ADP + H(+). Its pathway is amino-acid biosynthesis; L-threonine biosynthesis; L-threonine from L-aspartate: step 4/5. Catalyzes the ATP-dependent phosphorylation of L-homoserine to L-homoserine phosphate. The protein is Homoserine kinase of Streptococcus suis (strain 98HAH33).